The following is a 656-amino-acid chain: uncharacterized protein (656 aa).

3 helical membrane-spanning segments follow: residues 7-27, 40-60, and 210-230; these read QQVL…LNHL, LMAM…FWTL, and AVFI…AFTI. In terms of domain architecture, HAMP spans 231–280; that stretch reads TRPIRELLTGVKNIASGDFYQRIDLPFGGELGALIFNFNEMAERLEKYEQ. The PAS domain occupies 289–359; it reads EKAKLETLVS…PILNDIIRKN (71 aa). The Histidine kinase domain occupies 424-654; the sequence is NVSHELRTPL…CFFFDLMIAK (231 aa). A Phosphohistidine; by autocatalysis modification is found at His-427.

The protein localises to the plastid. It localises to the chloroplast membrane. It catalyses the reaction ATP + protein L-histidine = ADP + protein N-phospho-L-histidine.. This is an uncharacterized protein from Porphyra purpurea (Red seaweed).